Reading from the N-terminus, the 134-residue chain is Aspartate 1-decarboxylase (134 aa).

Ser-25 acts as the Schiff-base intermediate with substrate; via pyruvic acid in catalysis. Ser-25 carries the post-translational modification Pyruvic acid (Ser). Thr-57 lines the substrate pocket. Residue Tyr-58 is the Proton donor of the active site. Residue 73–75 (GAA) coordinates substrate.

This sequence belongs to the PanD family. As to quaternary structure, heterooctamer of four alpha and four beta subunits. Requires pyruvate as cofactor. Is synthesized initially as an inactive proenzyme, which is activated by self-cleavage at a specific serine bond to produce a beta-subunit with a hydroxyl group at its C-terminus and an alpha-subunit with a pyruvoyl group at its N-terminus.

It is found in the cytoplasm. It carries out the reaction L-aspartate + H(+) = beta-alanine + CO2. Its pathway is cofactor biosynthesis; (R)-pantothenate biosynthesis; beta-alanine from L-aspartate: step 1/1. Its function is as follows. Catalyzes the pyruvoyl-dependent decarboxylation of aspartate to produce beta-alanine. This is Aspartate 1-decarboxylase from Mycolicibacterium gilvum (strain PYR-GCK) (Mycobacterium gilvum (strain PYR-GCK)).